The chain runs to 230 residues: tRNA (guanine-N(7)-)-methyltransferase (230 aa).

S-adenosyl-L-methionine-binding residues include Glu61, Glu86, Asp113, and Asp135. Asp135 is an active-site residue. Residues Lys139, Asp171, and 209–212 (TRYE) each bind substrate.

This sequence belongs to the class I-like SAM-binding methyltransferase superfamily. TrmB family.

It catalyses the reaction guanosine(46) in tRNA + S-adenosyl-L-methionine = N(7)-methylguanosine(46) in tRNA + S-adenosyl-L-homocysteine. It functions in the pathway tRNA modification; N(7)-methylguanine-tRNA biosynthesis. Its function is as follows. Catalyzes the formation of N(7)-methylguanine at position 46 (m7G46) in tRNA. The protein is tRNA (guanine-N(7)-)-methyltransferase of Rhizobium etli (strain ATCC 51251 / DSM 11541 / JCM 21823 / NBRC 15573 / CFN 42).